The primary structure comprises 154 residues: UPF0756 membrane protein BLi03063/BL00400 (154 aa).

Helical transmembrane passes span Phe8–Val28, Trp54–Phe74, Trp87–Leu107, and Leu117–Ile137.

The protein belongs to the UPF0756 family.

The protein localises to the cell membrane. In Bacillus licheniformis (strain ATCC 14580 / DSM 13 / JCM 2505 / CCUG 7422 / NBRC 12200 / NCIMB 9375 / NCTC 10341 / NRRL NRS-1264 / Gibson 46), this protein is UPF0756 membrane protein BLi03063/BL00400.